The chain runs to 766 residues: Darlin (766 aa).

ARM repeat units follow at residues 82 to 119 (QLFE…NLTY), 167 to 208 (DFIQ…NLVD), 423 to 464 (EPNC…NLTL), and 465 to 537 (PTIN…ASMD). A disordered region spans residues 561 to 585 (EEKEKTIEKTDEKTDEKTNEKKQSK). Residues 610-649 (HQEKMKQLIEESVEPFFSLLQSPFPILQVEGAKGLVLLIK) form an ARM 5 repeat.

The protein belongs to the RAP1GDS1 family. As to quaternary structure, binds to small GTPases racE, racC but not rab21. Binds preferentially to GDP-bound racE.

In terms of biological role, part of a signaling pathway that initiates the aggregation and leads to the formation of aggregation centers or streams. Not essential for cytokinesis, pinocytosis or phagocytosis. Not essential for development, except in starvation-induced aggregation. In Dictyostelium discoideum (Social amoeba), this protein is Darlin (darA).